Consider the following 160-residue polypeptide: Small ribosomal subunit protein uS19 (160 aa).

This sequence belongs to the universal ribosomal protein uS19 family.

Protein S19 forms a complex with S13 that binds strongly to the 16S ribosomal RNA. The protein is Small ribosomal subunit protein uS19 of Pyrobaculum islandicum (strain DSM 4184 / JCM 9189 / GEO3).